We begin with the raw amino-acid sequence, 982 residues long: Cell division cycle-associated protein 2 (982 aa).

Over residues 75–87 (VKTSSGKSTSSLQ) the composition is skewed to polar residues. Residues 75 to 97 (VKTSSGKSTSSLQKARRRSTVGV) form a disordered region. Residues Ser100, Ser122, and Ser133 each carry the phosphoserine modification. 2 disordered regions span residues 192–216 (SGFP…NYLS) and 274–315 (TPLS…CGSS). 2 stretches are compositionally biased toward polar residues: residues 207 to 216 (SQDSPDNYLS) and 275 to 315 (PLSS…CGSS). Residues Ser286, Ser296, and Ser306 each carry the phosphoserine modification. Position 309 is a phosphothreonine (Thr309). The PP1-binding domain maps to 379-436 (KRKRVTFGEDLSPEVFDESLPANTPLCKGGTPVRPRTVKTTSPLQSPVHEQFLQPNFD). Residues Ser390 and Ser397 each carry the phosphoserine modification. 4 disordered regions span residues 400–473 (ANTP…NTCS), 489–545 (TRTS…KSYR), 568–638 (KPLL…QSQV), and 651–716 (ASER…PQSQ). Thr402 is subject to Phosphothreonine. Residue Ser424 is modified to Phosphoserine. Polar residues-rich tracts occupy residues 451–473 (SFAN…NTCS) and 498–512 (TLSS…TTQA). The span at 518-545 (KMSRRKSREKKHTSAALPKKKQVLKSYR) shows a compositional bias: basic residues. 2 positions are modified to phosphoserine: Ser572 and Ser595. Polar residues predominate over residues 651–668 (ASERGPNASTRDTGSEGN). Residues 669–685 (TRAESKCQSAKEPKPGT) are compositionally biased toward basic and acidic residues. Position 735 is a phosphoserine (Ser735). Lys741 is covalently cross-linked (Glycyl lysine isopeptide (Lys-Gly) (interchain with G-Cter in SUMO2)). The segment at 910 to 982 (ECPSSKEETI…SLKGESAQLP (73 aa)) is disordered. Phosphoserine is present on Ser913. Over residues 931 to 942 (VSGSESQGVGSS) the composition is skewed to low complexity. Phosphoserine is present on Ser950. Residues 952–964 (CGSTLTDANSATQ) are compositionally biased toward polar residues. Ser973 carries the phosphoserine modification.

As to quaternary structure, interacts with PPP1CC. Phosphorylated by CDK1. May regulate its subcellular location.

Its subcellular location is the nucleus. Its function is as follows. Regulator of chromosome structure during mitosis required for condensin-depleted chromosomes to retain their compact architecture through anaphase. Acts by mediating the recruitment of phopsphatase PP1-gamma subunit (PPP1CC) to chromatin at anaphase and into the following interphase. At anaphase onset, its association with chromatin targets a pool of PPP1CC to dephosphorylate substrates. In Mus musculus (Mouse), this protein is Cell division cycle-associated protein 2 (Cdca2).